Reading from the N-terminus, the 422-residue chain is UDP-N-acetylglucosamine 1-carboxyvinyltransferase (422 aa).

Residue 22 to 23 coordinates phosphoenolpyruvate; that stretch reads KN. A UDP-N-acetyl-alpha-D-glucosamine-binding site is contributed by Arg93. Cys117 functions as the Proton donor in the catalytic mechanism. Position 117 is a 2-(S-cysteinyl)pyruvic acid O-phosphothioketal (Cys117). UDP-N-acetyl-alpha-D-glucosamine contacts are provided by residues 122–126, Asp308, and Leu330; that span reads RPVDL.

This sequence belongs to the EPSP synthase family. MurA subfamily.

Its subcellular location is the cytoplasm. The enzyme catalyses phosphoenolpyruvate + UDP-N-acetyl-alpha-D-glucosamine = UDP-N-acetyl-3-O-(1-carboxyvinyl)-alpha-D-glucosamine + phosphate. It functions in the pathway cell wall biogenesis; peptidoglycan biosynthesis. Its function is as follows. Cell wall formation. Adds enolpyruvyl to UDP-N-acetylglucosamine. The protein is UDP-N-acetylglucosamine 1-carboxyvinyltransferase of Helicobacter pylori (strain ATCC 700392 / 26695) (Campylobacter pylori).